Reading from the N-terminus, the 110-residue chain is Phosphoribosyl-ATP pyrophosphatase (110 aa).

The protein belongs to the PRA-PH family.

The protein resides in the cytoplasm. It carries out the reaction 1-(5-phospho-beta-D-ribosyl)-ATP + H2O = 1-(5-phospho-beta-D-ribosyl)-5'-AMP + diphosphate + H(+). It participates in amino-acid biosynthesis; L-histidine biosynthesis; L-histidine from 5-phospho-alpha-D-ribose 1-diphosphate: step 2/9. The sequence is that of Phosphoribosyl-ATP pyrophosphatase from Pseudomonas fluorescens (strain ATCC BAA-477 / NRRL B-23932 / Pf-5).